The primary structure comprises 349 residues: S-adenosylmethionine:tRNA ribosyltransferase-isomerase (349 aa).

It belongs to the QueA family. In terms of assembly, monomer.

The protein localises to the cytoplasm. The catalysed reaction is 7-aminomethyl-7-carbaguanosine(34) in tRNA + S-adenosyl-L-methionine = epoxyqueuosine(34) in tRNA + adenine + L-methionine + 2 H(+). It functions in the pathway tRNA modification; tRNA-queuosine biosynthesis. Transfers and isomerizes the ribose moiety from AdoMet to the 7-aminomethyl group of 7-deazaguanine (preQ1-tRNA) to give epoxyqueuosine (oQ-tRNA). The chain is S-adenosylmethionine:tRNA ribosyltransferase-isomerase from Pseudomonas entomophila (strain L48).